The following is a 342-amino-acid chain: Hydrogenase expression/formation protein HupV (342 aa).

The protein belongs to the HupK family.

The chain is Hydrogenase expression/formation protein HupV (hupV) from Azotobacter chroococcum mcd 1.